The following is an 860-amino-acid chain: Leucine--tRNA ligase (860 aa).

A 'HIGH' region motif is present at residues 42 to 52 (PYPSGRLHMGH). Positions 619–623 (KMSKS) match the 'KMSKS' region motif. Lys622 is a binding site for ATP.

Belongs to the class-I aminoacyl-tRNA synthetase family.

Its subcellular location is the cytoplasm. The catalysed reaction is tRNA(Leu) + L-leucine + ATP = L-leucyl-tRNA(Leu) + AMP + diphosphate. The polypeptide is Leucine--tRNA ligase (Escherichia coli O127:H6 (strain E2348/69 / EPEC)).